The sequence spans 681 residues: PTS system glucose-specific EIICBA component (681 aa).

A PTS EIIC type-1 domain is found at 3–414; sequence KKLFGQLQRI…LKYKTPGRED (412 aa). 10 helical membrane passes run 16-36, 73-93, 126-146, 170-190, 199-219, 273-293, 303-323, 328-348, 355-375, and 383-403; these read LMLP…GTAI, MIFA…AAIA, ILGI…GALA, FVPI…ALIW, AFST…FGFI, FMQG…LAIY, VVAG…ITEP, FLFV…LSFL, VHLG…GVLP, and VIPV…FLIV. Residues 425–506 form the PTS EIIB type-1 domain; that stretch reads TELPYAVLEA…QQIMNGQVVE (82 aa). Residue Cys447 is the Phosphocysteine intermediate; for EIIB activity of the active site. Residues 551–655 enclose the PTS EIIA type-1 domain; the sequence is DQVFSEKMMG…SDITPIIVTQ (105 aa). His603 functions as the Tele-phosphohistidine intermediate; for EIIA activity in the catalytic mechanism.

It localises to the cell membrane. It carries out the reaction N(pros)-phospho-L-histidyl-[protein] + D-glucose(out) = D-glucose 6-phosphate(in) + L-histidyl-[protein]. Its function is as follows. The phosphoenolpyruvate-dependent sugar phosphotransferase system (sugar PTS), a major carbohydrate active transport system, catalyzes the phosphorylation of incoming sugar substrates concomitantly with their translocation across the cell membrane. This system is involved in glucose transport. In Staphylococcus aureus (strain JH9), this protein is PTS system glucose-specific EIICBA component (ptsG).